A 105-amino-acid polypeptide reads, in one-letter code: uncharacterized protein (105 aa).

This is an uncharacterized protein from Rickettsia conorii (strain ATCC VR-613 / Malish 7).